The primary structure comprises 292 residues: 2-(5''-triphosphoribosyl)-3'-dephosphocoenzyme-A synthase (292 aa).

The protein belongs to the CitG/MdcB family.

It catalyses the reaction 3'-dephospho-CoA + ATP = 2'-(5''-triphospho-alpha-D-ribosyl)-3'-dephospho-CoA + adenine. Its function is as follows. Catalyzes the formation of 2-(5''-triphosphoribosyl)-3'-dephosphocoenzyme-A, the precursor of the prosthetic group of the holo-acyl carrier protein (gamma chain) of citrate lyase, from ATP and dephospho-CoA. This is 2-(5''-triphosphoribosyl)-3'-dephosphocoenzyme-A synthase from Escherichia coli (strain UTI89 / UPEC).